We begin with the raw amino-acid sequence, 283 residues long: Protease HtpX (283 aa).

Transmembrane regions (helical) follow at residues 4–24 (ILLF…ILSV) and 33–53 (GGIL…SLFL). Residue histidine 139 coordinates Zn(2+). Residue glutamate 140 is part of the active site. Residue histidine 143 coordinates Zn(2+). 2 helical membrane-spanning segments follow: residues 147–167 (GDMV…IFLS) and 190–210 (IYFL…SIIA). Glutamate 218 provides a ligand contact to Zn(2+).

Belongs to the peptidase M48B family. The cofactor is Zn(2+).

It localises to the cell inner membrane. This chain is Protease HtpX, found in Haemophilus influenzae (strain PittGG).